Consider the following 258-residue polypeptide: Deoxyribose-phosphate aldolase (258 aa).

Residue aspartate 102 is the Proton donor/acceptor of the active site. Catalysis depends on lysine 165, which acts as the Schiff-base intermediate with acetaldehyde. Catalysis depends on lysine 199, which acts as the Proton donor/acceptor.

It belongs to the DeoC/FbaB aldolase family. DeoC type 2 subfamily.

It is found in the cytoplasm. The catalysed reaction is 2-deoxy-D-ribose 5-phosphate = D-glyceraldehyde 3-phosphate + acetaldehyde. Its pathway is carbohydrate degradation; 2-deoxy-D-ribose 1-phosphate degradation; D-glyceraldehyde 3-phosphate and acetaldehyde from 2-deoxy-alpha-D-ribose 1-phosphate: step 2/2. Its function is as follows. Catalyzes a reversible aldol reaction between acetaldehyde and D-glyceraldehyde 3-phosphate to generate 2-deoxy-D-ribose 5-phosphate. The protein is Deoxyribose-phosphate aldolase of Aliivibrio fischeri (strain MJ11) (Vibrio fischeri).